Reading from the N-terminus, the 207-residue chain is A-type ATP synthase subunit E (207 aa).

It belongs to the V-ATPase E subunit family. In terms of assembly, has multiple subunits with at least A(3), B(3), C, D, E, F, H, I and proteolipid K(x).

Its subcellular location is the cell membrane. Functionally, component of the A-type ATP synthase that produces ATP from ADP in the presence of a proton gradient across the membrane. The chain is A-type ATP synthase subunit E from Methanosphaera stadtmanae (strain ATCC 43021 / DSM 3091 / JCM 11832 / MCB-3).